Consider the following 209-residue polypeptide: Probable GTP-binding protein EngB (209 aa).

The EngB-type G domain maps to 12–203; that stretch reads VSFEIIFVGR…RDRLHEMKRD (192 aa). GTP is bound by residues 20 to 27, 45 to 49, 62 to 65, 142 to 145, and 179 to 181; these read GRSNVGKS, GVTLR, DMPG, NKMD, and ISA. 2 residues coordinate Mg(2+): S27 and T47.

It belongs to the TRAFAC class TrmE-Era-EngA-EngB-Septin-like GTPase superfamily. EngB GTPase family. Mg(2+) is required as a cofactor.

In terms of biological role, necessary for normal cell division and for the maintenance of normal septation. This chain is Probable GTP-binding protein EngB, found in Methanosarcina barkeri (strain Fusaro / DSM 804).